The primary structure comprises 303 residues: Probable 5-dehydro-4-deoxyglucarate dehydratase (303 aa).

Belongs to the DapA family.

It carries out the reaction 5-dehydro-4-deoxy-D-glucarate + H(+) = 2,5-dioxopentanoate + CO2 + H2O. It functions in the pathway carbohydrate acid metabolism; D-glucarate degradation; 2,5-dioxopentanoate from D-glucarate: step 2/2. This chain is Probable 5-dehydro-4-deoxyglucarate dehydratase, found in Acinetobacter baumannii (strain AB307-0294).